The primary structure comprises 562 residues: O-fucosyltransferase 4 (562 aa).

A disordered region spans residues 10–46; it reads SIQNRLPGSDHTTPSPPTSPHLCRSRSKSSSVSGQQQ. A compositionally biased stretch (low complexity) spans 37–46; sequence KSSSVSGQQQ. The chain crosses the membrane as a helical; Signal-anchor for type II membrane protein span at residues 67–87; the sequence is GILLFAPIIYISCMLFHLHAA. N-linked (GlcNAc...) asparagine glycosylation is found at Asn122, Asn146, Asn185, and Asn239. Substrate is bound at residue 332–334; the sequence is HLR. Residues Asn404, Asn420, Asn450, and Asn555 are each glycosylated (N-linked (GlcNAc...) asparagine).

The protein belongs to the glycosyltransferase GT106 family.

The protein localises to the membrane. It participates in glycan metabolism. The polypeptide is O-fucosyltransferase 4 (Arabidopsis thaliana (Mouse-ear cress)).